Consider the following 83-residue polypeptide: Carboxysome shell vertex protein CsoS4A (83 aa).

The 78-residue stretch at 1-78 folds into the BMV domain; the sequence is MKIMQVEKTL…SDLTIIGIID (78 aa).

The protein belongs to the CcmL/EutN family. CsoS4 subfamily. Homopentamer.

It localises to the carboxysome. In terms of biological role, probably forms vertices in the carboxysome, a polyhedral inclusion where RuBisCO (ribulose bisphosphate carboxylase, cbbL-cbbS) is sequestered. Has been modeled to induce curvature upon insertion into an otherwise flat hexagonal layer of major carboxysome subunits. A minor shell protein, only 12 pentamers of CsoS4A/CsoS4B are calculated to be present in each carboxysome. The 2 CsoS4 proteins contribute to the impermeability of the carboxysome to CO(2). Its function is as follows. Unlike beta-carboxysomes, alpha-carboxysomes (Cb) can form without cargo protein. CsoS2 is essential for Cb formation and is also capable of targeting foreign proteins to the Cb. The Cb shell assembles with the aid of CsoS2; CsoS1A, CsoS1B and CsoS1C form the majority of the shell while CsoS4A and CsoS4B form vertices. CsoS1D forms pseudohexamers that probably control metabolite flux into and out of the shell. In Halothiobacillus neapolitanus (strain ATCC 23641 / c2) (Thiobacillus neapolitanus), this protein is Carboxysome shell vertex protein CsoS4A.